The following is a 423-amino-acid chain: Tyrosine--tRNA ligase (423 aa).

Residue Y35 coordinates L-tyrosine. The 'HIGH' region signature appears at 40-49; the sequence is PTAASLHVGH. Residues Y170 and Q174 each contribute to the L-tyrosine site. The 'KMSKS' region signature appears at 231–235; the sequence is KFGKS. K234 provides a ligand contact to ATP. One can recognise an S4 RNA-binding domain in the interval 353-419; it reads GPLVDLLVEV…GKKNLAAVEV (67 aa).

The protein belongs to the class-I aminoacyl-tRNA synthetase family. TyrS type 1 subfamily. In terms of assembly, homodimer.

It is found in the cytoplasm. The enzyme catalyses tRNA(Tyr) + L-tyrosine + ATP = L-tyrosyl-tRNA(Tyr) + AMP + diphosphate + H(+). Catalyzes the attachment of tyrosine to tRNA(Tyr) in a two-step reaction: tyrosine is first activated by ATP to form Tyr-AMP and then transferred to the acceptor end of tRNA(Tyr). The chain is Tyrosine--tRNA ligase from Streptomyces griseus subsp. griseus (strain JCM 4626 / CBS 651.72 / NBRC 13350 / KCC S-0626 / ISP 5235).